The chain runs to 347 residues: Aurora kinase A- and ninein-interacting protein (347 aa).

Residues glutamine 182–histidine 347 form an interaction with AURKA region. The interval arginine 273–histidine 347 is interaction with RBBP8/CtIP. Phosphoserine is present on serine 284. Polar residues predominate over residues valine 301–aspartate 322. A disordered region spans residues valine 301 to threonine 325.

It belongs to the AUNIP family. As to quaternary structure, interacts (via C-terminus) with AURKA (via C-terminus). Interacts (via N-terminus) with NIN; this interaction blocks NIN phosphorylation by both AURKA and GSK3B. Identified in a complex with NIN and AURKA. Interacts with RBBP8/CtIP.

It is found in the nucleus. The protein localises to the chromosome. Its subcellular location is the cytoplasm. It localises to the cytoskeleton. The protein resides in the microtubule organizing center. It is found in the centrosome. The protein localises to the spindle pole. In terms of biological role, DNA-binding protein that accumulates at DNA double-strand breaks (DSBs) following DNA damage and promotes DNA resection and homologous recombination. Serves as a sensor of DNA damage: binds DNA with a strong preference for DNA substrates that mimic structures generated at stalled replication forks, and anchors RBBP8/CtIP to DSB sites to promote DNA end resection and ensuing homologous recombination repair. Inhibits non-homologous end joining (NHEJ). Required for the dynamic movement of AURKA at the centrosomes and spindle apparatus during the cell cycle. The polypeptide is Aurora kinase A- and ninein-interacting protein (Rattus norvegicus (Rat)).